A 206-amino-acid polypeptide reads, in one-letter code: Small ribosomal subunit protein uS7 (206 aa).

It belongs to the universal ribosomal protein uS7 family. In terms of assembly, component of the small ribosomal subunit.

Its subcellular location is the cytoplasm. Its function is as follows. Component of the small ribosomal subunit. The ribosome is a large ribonucleoprotein complex responsible for the synthesis of proteins in the cell. The chain is Small ribosomal subunit protein uS7 from Entamoeba histolytica (strain ATCC 30459 / HM-1:IMSS / ABRM).